We begin with the raw amino-acid sequence, 160 residues long: 6,7-dimethyl-8-ribityllumazine synthase (160 aa).

5-amino-6-(D-ribitylamino)uracil-binding positions include W27, 59–61 (AIE), and 81–83 (VVI). 86–87 (QT) contributes to the (2S)-2-hydroxy-3-oxobutyl phosphate binding site. H89 functions as the Proton donor in the catalytic mechanism. A 5-amino-6-(D-ribitylamino)uracil-binding site is contributed by N114. R128 serves as a coordination point for (2S)-2-hydroxy-3-oxobutyl phosphate.

The protein belongs to the DMRL synthase family. As to quaternary structure, homopentamer.

It carries out the reaction (2S)-2-hydroxy-3-oxobutyl phosphate + 5-amino-6-(D-ribitylamino)uracil = 6,7-dimethyl-8-(1-D-ribityl)lumazine + phosphate + 2 H2O + H(+). Its pathway is cofactor biosynthesis; riboflavin biosynthesis; riboflavin from 2-hydroxy-3-oxobutyl phosphate and 5-amino-6-(D-ribitylamino)uracil: step 1/2. Its function is as follows. Catalyzes the formation of 6,7-dimethyl-8-ribityllumazine by condensation of 5-amino-6-(D-ribitylamino)uracil with 3,4-dihydroxy-2-butanone 4-phosphate. This is the penultimate step in the biosynthesis of riboflavin. In Mycobacterium tuberculosis (strain CDC 1551 / Oshkosh), this protein is 6,7-dimethyl-8-ribityllumazine synthase (ribH).